The chain runs to 314 residues: 2,3-dihydroxyphenylpropionate/2,3-dihydroxicinnamic acid 1,2-dioxygenase (314 aa).

The active-site Proton donor is His115. Catalysis depends on His179, which acts as the Proton acceptor.

Belongs to the LigB/MhpB extradiol dioxygenase family. In terms of assembly, homotetramer. Fe(2+) is required as a cofactor.

It catalyses the reaction 3-(2,3-dihydroxyphenyl)propanoate + O2 = (2Z,4E)-2-hydroxy-6-oxonona-2,4-dienedioate + H(+). The enzyme catalyses (2E)-3-(2,3-dihydroxyphenyl)prop-2-enoate + O2 = (2Z,4E,7E)-2-hydroxy-6-oxonona-2,4,7-trienedioate + H(+). It participates in aromatic compound metabolism; 3-phenylpropanoate degradation. Its function is as follows. Catalyzes the non-heme iron(II)-dependent oxidative cleavage of 2,3-dihydroxyphenylpropionic acid and 2,3-dihydroxicinnamic acid into 2-hydroxy-6-ketononadienedioate and 2-hydroxy-6-ketononatrienedioate, respectively. The polypeptide is 2,3-dihydroxyphenylpropionate/2,3-dihydroxicinnamic acid 1,2-dioxygenase (Escherichia coli O139:H28 (strain E24377A / ETEC)).